The following is a 186-amino-acid chain: Acireductone dioxygenase (186 aa).

Positions 89, 91, 95, and 134 each coordinate Fe(2+). Residues histidine 89, histidine 91, glutamate 95, and histidine 134 each contribute to the Ni(2+) site.

It belongs to the acireductone dioxygenase (ARD) family. The cofactor is Fe(2+). Requires Ni(2+) as cofactor.

It is found in the cytoplasm. It localises to the nucleus. The catalysed reaction is 1,2-dihydroxy-5-(methylsulfanyl)pent-1-en-3-one + O2 = 4-methylsulfanyl-2-oxobutanoate + formate + 2 H(+). It carries out the reaction 1,2-dihydroxy-5-(methylsulfanyl)pent-1-en-3-one + O2 = 3-(methylsulfanyl)propanoate + CO + formate + 2 H(+). It participates in amino-acid biosynthesis; L-methionine biosynthesis via salvage pathway; L-methionine from S-methyl-5-thio-alpha-D-ribose 1-phosphate: step 5/6. In terms of biological role, catalyzes 2 different reactions between oxygen and the acireductone 1,2-dihydroxy-3-keto-5-methylthiopentene (DHK-MTPene) depending upon the metal bound in the active site. Fe-containing acireductone dioxygenase (Fe-ARD) produces formate and 2-keto-4-methylthiobutyrate (KMTB), the alpha-ketoacid precursor of methionine in the methionine recycle pathway. Ni-containing acireductone dioxygenase (Ni-ARD) produces methylthiopropionate, carbon monoxide and formate, and does not lie on the methionine recycle pathway. This Drosophila melanogaster (Fruit fly) protein is Acireductone dioxygenase.